The sequence spans 215 residues: Ribose-5-phosphate isomerase A (215 aa).

Substrate-binding positions include 26 to 29 (TGST), 79 to 82 (DGAD), and 92 to 95 (KGGG). The active-site Proton acceptor is the glutamate 101. Lysine 119 contacts substrate.

It belongs to the ribose 5-phosphate isomerase family. In terms of assembly, homodimer.

The enzyme catalyses aldehydo-D-ribose 5-phosphate = D-ribulose 5-phosphate. The protein operates within carbohydrate degradation; pentose phosphate pathway; D-ribose 5-phosphate from D-ribulose 5-phosphate (non-oxidative stage): step 1/1. Functionally, catalyzes the reversible conversion of ribose-5-phosphate to ribulose 5-phosphate. The polypeptide is Ribose-5-phosphate isomerase A (Xanthomonas oryzae pv. oryzae (strain MAFF 311018)).